Reading from the N-terminus, the 160-residue chain is Major pollen allergen Bet v 1-A (160 aa).

Residues lysine 55, tyrosine 82, tyrosine 84, and asparagine 101 each coordinate brassinolide.

Belongs to the BetVI family.

The protein resides in the cytoplasm. In terms of biological role, may be a general steroid carrier protein. In Betula pendula (European white birch), this protein is Major pollen allergen Bet v 1-A (BETVIA).